The chain runs to 37 residues: Small ribosomal subunit protein eS32 (37 aa).

The protein belongs to the eukaryotic ribosomal protein eS32 family. Part of the small ribosomal subunit.

Functionally, interacts with N(4)-acetylcytidine (ac(4)C) 1459 of the small rRNA; the acetyl group of ac(4)C1459 briges the interaction with this protein. This chain is Small ribosomal subunit protein eS32 (rpl41e), found in Thermococcus kodakarensis (strain ATCC BAA-918 / JCM 12380 / KOD1) (Pyrococcus kodakaraensis (strain KOD1)).